A 236-amino-acid polypeptide reads, in one-letter code: 1-(5-phosphoribosyl)-5-[(5-phosphoribosylamino)methylideneamino] imidazole-4-carboxamide isomerase (236 aa).

Residue Asp-8 is the Proton acceptor of the active site. The active-site Proton donor is Asp-127.

It belongs to the HisA/HisF family.

It is found in the cytoplasm. It carries out the reaction 1-(5-phospho-beta-D-ribosyl)-5-[(5-phospho-beta-D-ribosylamino)methylideneamino]imidazole-4-carboxamide = 5-[(5-phospho-1-deoxy-D-ribulos-1-ylimino)methylamino]-1-(5-phospho-beta-D-ribosyl)imidazole-4-carboxamide. It participates in amino-acid biosynthesis; L-histidine biosynthesis; L-histidine from 5-phospho-alpha-D-ribose 1-diphosphate: step 4/9. In Campylobacter fetus subsp. fetus (strain 82-40), this protein is 1-(5-phosphoribosyl)-5-[(5-phosphoribosylamino)methylideneamino] imidazole-4-carboxamide isomerase.